We begin with the raw amino-acid sequence, 232 residues long: MTAPDSSSAPAPLAFGGKPRVYPMRLYGDPILRRKARNLTAADTLHVPGFEPQTVREVADTMLETMFEERGVGLAAPQIGLPVRMFVAVEYADDEEENEGQETPLRSRVLREYVMLNPVVKVINKKKDKSYQEGCLSIPGIYEDGVPRARQVRVDYTDLDGQPRSIEAEDYLARVFQHETDHLDGKLFLDHLPADITEDHRKDLLRIQQASKNFLAQLSEWDKAQRHLKENL.

Fe cation contacts are provided by Cys135 and His178. Residue Glu179 is part of the active site. His182 is a Fe cation binding site.

The protein belongs to the polypeptide deformylase family. Requires Fe(2+) as cofactor.

It carries out the reaction N-terminal N-formyl-L-methionyl-[peptide] + H2O = N-terminal L-methionyl-[peptide] + formate. Its function is as follows. Removes the formyl group from the N-terminal Met of newly synthesized proteins. Requires at least a dipeptide for an efficient rate of reaction. N-terminal L-methionine is a prerequisite for activity but the enzyme has broad specificity at other positions. The protein is Peptide deformylase of Deinococcus radiodurans (strain ATCC 13939 / DSM 20539 / JCM 16871 / CCUG 27074 / LMG 4051 / NBRC 15346 / NCIMB 9279 / VKM B-1422 / R1).